Here is a 93-residue protein sequence, read N- to C-terminus: Small ribosomal subunit protein uS19 (93 aa).

This sequence belongs to the universal ribosomal protein uS19 family.

Its function is as follows. Protein S19 forms a complex with S13 that binds strongly to the 16S ribosomal RNA. The chain is Small ribosomal subunit protein uS19 from Ehrlichia ruminantium (strain Welgevonden).